A 630-amino-acid polypeptide reads, in one-letter code: Probable potassium transport system protein Kup (630 aa).

The next 12 membrane-spanning stretches (helical) occupy residues 17-37 (LAIA…LYSL), 51-71 (PSAI…VVGI), 105-125 (ITGL…GDAV), 144-164 (PQLS…LFWI), 175-195 (LFGP…IYHI), 218-238 (VLLA…AEAL), 255-275 (YVLV…LLLL), 283-303 (PFFL…STVA), 344-364 (IYVP…VIGF), 374-394 (YGIA…VVMV), 402-422 (LLVA…FGAN), and 428-448 (QGGW…MTWY).

It belongs to the HAK/KUP transporter (TC 2.A.72) family.

It is found in the cell inner membrane. It catalyses the reaction K(+)(in) + H(+)(in) = K(+)(out) + H(+)(out). Its function is as follows. Transport of potassium into the cell. Likely operates as a K(+):H(+) symporter. In Burkholderia mallei (strain NCTC 10247), this protein is Probable potassium transport system protein Kup.